A 200-amino-acid chain; its full sequence is Superoxide dismutase [Mn] 2 (200 aa).

Residues His-28, His-76, Asp-158, and His-162 each contribute to the Mn(2+) site.

Belongs to the iron/manganese superoxide dismutase family. Mn(2+) serves as cofactor.

It catalyses the reaction 2 superoxide + 2 H(+) = H2O2 + O2. In terms of biological role, destroys superoxide anion radicals which are normally produced within the cells and which are toxic to biological systems. In Halobacterium salinarum (strain ATCC 700922 / JCM 11081 / NRC-1) (Halobacterium halobium), this protein is Superoxide dismutase [Mn] 2 (sod2).